We begin with the raw amino-acid sequence, 549 residues long: mRNA-capping enzyme subunit beta (549 aa).

The residue at position 2 (Ser-2) is an N-acetylserine. Ser-15 bears the Phosphoserine mark. The tract at residues 30-169 (LQKLSEAANG…QGNEGNIASN (140 aa)) is disordered. The span at 86–96 (DDEETDTDDEM) shows a compositional bias: acidic residues. Position 124 is a phosphoserine (Ser-124). A compositionally biased stretch (basic and acidic residues) spans 135–157 (AKLEKPSDDSIHQNSKSDEEQRI). Catalysis depends on Lys-223, which acts as the N6-GMP-lysine intermediate.

It belongs to the fungal TPase family. In terms of assembly, heterodimer. The mRNA-capping enzyme is composed of two separate chains alpha and beta, respectively a mRNA guanylyltransferase and an mRNA 5'-triphosphate monophosphatase. Requires Mg(2+) as cofactor.

The protein localises to the nucleus. It catalyses the reaction a 5'-end triphospho-ribonucleoside in mRNA + H2O = a 5'-end diphospho-ribonucleoside in mRNA + phosphate + H(+). Its function is as follows. First step of mRNA capping. Converts the 5'-triphosphate end of a nascent mRNA chain into a diphosphate end. This is mRNA-capping enzyme subunit beta (CET1) from Saccharomyces cerevisiae (strain ATCC 204508 / S288c) (Baker's yeast).